The chain runs to 101 residues: Feather keratin Cos2-2 (101 aa).

Serine 2 bears the N-acetylserine mark.

It belongs to the avian keratin family. As to quaternary structure, the avian keratins (F-ker, S-ker, C-ker and B-ker) are a complex mixture of very similar polypeptides.

The sequence is that of Feather keratin Cos2-2 from Columba livia (Rock dove).